The following is a 351-amino-acid chain: MLEKESDLTAMEKPNNKHAADSFSSEDLVSPVKKAKKSEEVSGGGEAVAAVGNREAEEDKPSFVSEEKKEFLVEADVAEDKGARHTMEDVWVVLPDASLDFPGTLRCAHFAIYDGHGGRLAAEFAKKHLHLNVLSAGLPRELLDVKVAKKAILEGFRKTDELLLQKSVSGGWQDGATAVCVWILDQKVFVANIGDAKAVLARSSTTNELGNHTEAGNPLKAIVLTREHKAIYPQERSRIQKSGGVISSNGRLQGRLEVSRAFGDRHFKKFGVSATPDIHAFELTERENFMILGCDGLWEVFGPSDAVGFVQKLLKEGLHVSTVSRRLVKEAVKERRCKDNCTAIVIVFKRV.

The disordered stretch occupies residues 1–63 (MLEKESDLTA…REAEEDKPSF (63 aa)). Over residues 54 to 63 (REAEEDKPSF) the composition is skewed to basic and acidic residues. A PPM-type phosphatase domain is found at 74–348 (EADVAEDKGA…DNCTAIVIVF (275 aa)). Mn(2+) contacts are provided by aspartate 114, glycine 115, aspartate 295, and aspartate 339.

Belongs to the PP2C family. Requires Mg(2+) as cofactor. Mn(2+) is required as a cofactor.

The catalysed reaction is O-phospho-L-seryl-[protein] + H2O = L-seryl-[protein] + phosphate. It carries out the reaction O-phospho-L-threonyl-[protein] + H2O = L-threonyl-[protein] + phosphate. This chain is Probable protein phosphatase 2C 8, found in Arabidopsis thaliana (Mouse-ear cress).